A 311-amino-acid chain; its full sequence is Probable manganese-dependent inorganic pyrophosphatase (311 aa).

Residues histidine 9, aspartate 13, aspartate 15, aspartate 75, histidine 97, and aspartate 149 each contribute to the Mn(2+) site.

This sequence belongs to the PPase class C family. Mn(2+) is required as a cofactor.

It is found in the cytoplasm. The catalysed reaction is diphosphate + H2O = 2 phosphate + H(+). The polypeptide is Probable manganese-dependent inorganic pyrophosphatase (Lactobacillus gasseri (strain ATCC 33323 / DSM 20243 / BCRC 14619 / CIP 102991 / JCM 1131 / KCTC 3163 / NCIMB 11718 / NCTC 13722 / AM63)).